The chain runs to 221 residues: MLEDLRLYQLISPSLPVGSFTYSQGLEWAIEKGWVTNVTELKHWLSNQLMDSLATLELPVLAKLTQLLQQEEWQQAQDWCDFIIANRETKELRLEERQRGLAFSMLLPKLGIELNQTTLPMVKQTQVAAFALAANHWNLTPTKLAAAYAWGWLENAVIVGIKLVPLGQSAGQQLLLEMADVIPQAVEKSQHWPEHLIGSFTPAQVLASSRHESQYTRLFRS.

It belongs to the UreF family. In terms of assembly, ureD, UreF and UreG form a complex that acts as a GTP-hydrolysis-dependent molecular chaperone, activating the urease apoprotein by helping to assemble the nickel containing metallocenter of UreC. The UreE protein probably delivers the nickel.

It localises to the cytoplasm. Required for maturation of urease via the functional incorporation of the urease nickel metallocenter. This chain is Urease accessory protein UreF, found in Aliivibrio fischeri (strain ATCC 700601 / ES114) (Vibrio fischeri).